The following is a 285-amino-acid chain: MSIKIENLNHIYMPKTPFEKIALNNINCEIEDGEFVALIGHTGSGKSTFIQHLNGLLSPTSGNIIVDGVNIADKKVKLSDIRKKVGLVFQYPEYQLFEETIEKDIEYGPRNLGISEEEISKRVKKSMEMVGLDYETYKDKSPFDLSGGQKRRVAIAGVIAMEPKVLILDEPTAGLDPKGREDILAQIRLLHKEYGMTIIMVSHSMEDVAKIADRVIVMNSGEIVLDGKIAEVFKEVETLEKIGLAVPQVTYLIRELRNKGFNISEEIFTISQAKEALLEIIRNNN.

The ABC transporter domain occupies 3–245 (IKIENLNHIY…VETLEKIGLA (243 aa)). An ATP-binding site is contributed by 40–47 (GHTGSGKS).

The protein belongs to the ABC transporter superfamily. Energy-coupling factor EcfA family. In terms of assembly, forms a stable energy-coupling factor (ECF) transporter complex composed of 2 membrane-embedded substrate-binding proteins (S component), 2 ATP-binding proteins (A component) and 2 transmembrane proteins (T component).

The protein localises to the cell membrane. Functionally, ATP-binding (A) component of a common energy-coupling factor (ECF) ABC-transporter complex. Unlike classic ABC transporters this ECF transporter provides the energy necessary to transport a number of different substrates. This chain is Energy-coupling factor transporter ATP-binding protein EcfA2, found in Clostridium perfringens (strain 13 / Type A).